Reading from the N-terminus, the 405-residue chain is Aspartokinase (405 aa).

7 to 10 (KYGG) is a binding site for ATP. Residue 25-30 (RIAHYR) coordinates substrate. Ser-41 contributes to the ATP binding site. Substrate-binding positions include 47–49 (TDE), Glu-74, 125–126 (LD), 150–153 (RGGS), and Ser-153. ATP contacts are provided by residues 173–174 (TD), 179–184 (YTTDPH), and Arg-209. 2 consecutive ACT domains span residues 263 to 342 (IGLI…IAKV) and 344 to 405 (IVGV…LDKA). Substrate contacts are provided by residues Asp-270, 274-275 (IA), 288-290 (AVD), Gln-294, 355-356 (VP), 369-370 (NI), and 376-377 (SE).

The protein belongs to the aspartokinase family. Heterotetramer consisting of 2 isoforms Alpha (catalytic and regulation) and of a homodimer of 2 isoforms Beta (regulation and thermostability).

It catalyses the reaction L-aspartate + ATP = 4-phospho-L-aspartate + ADP. It participates in amino-acid biosynthesis; L-lysine biosynthesis via DAP pathway; (S)-tetrahydrodipicolinate from L-aspartate: step 1/4. It functions in the pathway amino-acid biosynthesis; L-methionine biosynthesis via de novo pathway; L-homoserine from L-aspartate: step 1/3. The protein operates within amino-acid biosynthesis; L-threonine biosynthesis; L-threonine from L-aspartate: step 1/5. Its activity is regulated as follows. Inhibited by threonine. Its function is as follows. Catalyzes the phosphorylation of the beta-carboxyl group of aspartic acid with ATP to yield 4-phospho-L-aspartate, which is involved in the branched biosynthetic pathway leading to the biosynthesis of amino acids threonine, isoleucine and methionine. The polypeptide is Aspartokinase (ask) (Thermus thermophilus).